Here is a 295-residue protein sequence, read N- to C-terminus: 4-hydroxy-tetrahydrodipicolinate synthase (295 aa).

A pyruvate-binding site is contributed by Thr46. The Proton donor/acceptor role is filled by Tyr134. The active-site Schiff-base intermediate with substrate is Lys162. Ile205 contributes to the pyruvate binding site.

The protein belongs to the DapA family. In terms of assembly, homotetramer; dimer of dimers.

The protein resides in the cytoplasm. The catalysed reaction is L-aspartate 4-semialdehyde + pyruvate = (2S,4S)-4-hydroxy-2,3,4,5-tetrahydrodipicolinate + H2O + H(+). It functions in the pathway amino-acid biosynthesis; L-lysine biosynthesis via DAP pathway; (S)-tetrahydrodipicolinate from L-aspartate: step 3/4. Its function is as follows. Catalyzes the condensation of (S)-aspartate-beta-semialdehyde [(S)-ASA] and pyruvate to 4-hydroxy-tetrahydrodipicolinate (HTPA). This Anaeromyxobacter dehalogenans (strain 2CP-1 / ATCC BAA-258) protein is 4-hydroxy-tetrahydrodipicolinate synthase.